The primary structure comprises 295 residues: Elongation factor Ts (295 aa).

Residues 79 to 82 form an involved in Mg(2+) ion dislocation from EF-Tu region; the sequence is TDFV.

It belongs to the EF-Ts family.

It is found in the cytoplasm. In terms of biological role, associates with the EF-Tu.GDP complex and induces the exchange of GDP to GTP. It remains bound to the aminoacyl-tRNA.EF-Tu.GTP complex up to the GTP hydrolysis stage on the ribosome. This Bacillus anthracis (strain A0248) protein is Elongation factor Ts.